Reading from the N-terminus, the 371-residue chain is Putative glutamate--cysteine ligase 2 (371 aa).

The protein belongs to the glutamate--cysteine ligase type 2 family. YbdK subfamily.

It carries out the reaction L-cysteine + L-glutamate + ATP = gamma-L-glutamyl-L-cysteine + ADP + phosphate + H(+). Its function is as follows. ATP-dependent carboxylate-amine ligase which exhibits weak glutamate--cysteine ligase activity. The protein is Putative glutamate--cysteine ligase 2 of Burkholderia thailandensis (strain ATCC 700388 / DSM 13276 / CCUG 48851 / CIP 106301 / E264).